We begin with the raw amino-acid sequence, 214 residues long: Large ribosomal subunit protein eL14 (214 aa).

An N6-acetyllysine modification is found at K79. An N6-acetyllysine; alternate modification is found at K85. Residue K85 is modified to N6-succinyllysine; alternate. A Glycyl lysine isopeptide (Lys-Gly) (interchain with G-Cter in SUMO2) cross-link involves residue K124. S139 carries the phosphoserine modification. The disordered stretch occupies residues 161 to 214 (PAKKITTEGKKAPAQKAPAQKAAGQKAAPPPKTQKGQKAPSQKAPAPKASGKKA). The stretch at 170–174 (KKAPA) is one 1-1; approximate repeat. Residues 170–189 (KKAPAQKAPAQKAAGQKAAP) are 4 X 5 AA tandem repeats of Q-K-A-[APS]-X. Residues 172–214 (APAQKAPAQKAAGQKAAPPPKTQKGQKAPSQKAPAPKASGKKA) show a composition bias toward low complexity. Tandem repeats lie at residues 175-179 (QKAPA), 180-184 (QKAAG), 185-189 (QKAAP), 192-194 (KTQ), and 195-197 (KGQ). The segment at 192–197 (KTQKGQ) is 2 X 3 AA tandem repeats of K-G-Q. An N6-succinyllysine modification is found at K203.

The protein belongs to the eukaryotic ribosomal protein eL14 family. In terms of assembly, component of the large ribosomal subunit.

It localises to the cytoplasm. Component of the large ribosomal subunit. The ribosome is a large ribonucleoprotein complex responsible for the synthesis of proteins in the cell. The polypeptide is Large ribosomal subunit protein eL14 (RPL14) (Bos taurus (Bovine)).